The following is a 313-amino-acid chain: Homoserine O-succinyltransferase (313 aa).

Cys-142 functions as the Acyl-thioester intermediate in the catalytic mechanism. The substrate site is built by Lys-163 and Ser-192. His-235 (proton acceptor) is an active-site residue. Glu-237 is an active-site residue. Arg-249 serves as a coordination point for substrate.

Belongs to the MetA family.

Its subcellular location is the cytoplasm. The enzyme catalyses L-homoserine + succinyl-CoA = O-succinyl-L-homoserine + CoA. It participates in amino-acid biosynthesis; L-methionine biosynthesis via de novo pathway; O-succinyl-L-homoserine from L-homoserine: step 1/1. Its function is as follows. Transfers a succinyl group from succinyl-CoA to L-homoserine, forming succinyl-L-homoserine. In Shewanella sp. (strain MR-4), this protein is Homoserine O-succinyltransferase.